We begin with the raw amino-acid sequence, 264 residues long: MNILPKKSWHVRNKDNVARVRRDEAQAREEEKERERRVLLAQQEARTEFLRKKARHQNSLPELEAAEAGAPGSGPVDLFRELLEEGKGVIRGNKEYKEEKRQEKERQEKALGILTYLGQSAAEAQTQPPWYQLPPGRGGPPPGPAPDEKIKSRLDPLREMQKHLGKKRQHGGDEGSRSRKEKEGSEKQRPKEPPSLDQLRAERLRREAAERSRAEALLARVQGRALQEGQPEEDETDDRRRRYNSQFNPQLARRPRQQDPHLTH.

2 disordered regions span residues 1 to 37 and 49 to 76; these read MNILPKKSWHVRNKDNVARVRRDEAQAREEEKERERR and FLRKKARHQNSLPELEAAEAGAPGSGPV. Positions 12 to 37 are enriched in basic and acidic residues; it reads RNKDNVARVRRDEAQAREEEKERERR. Positions 16-46 form a coiled coil; that stretch reads NVARVRRDEAQAREEEKERERRVLLAQQEAR. Serine 59 bears the Phosphoserine mark. Low complexity predominate over residues 59-75; that stretch reads SLPELEAAEAGAPGSGP. Positions 89-115 form a coiled coil; sequence VIRGNKEYKEEKRQEKERQEKALGILT. Positions 118-264 are disordered; the sequence is GQSAAEAQTQ…PRQQDPHLTH (147 aa). Basic and acidic residues-rich tracts occupy residues 146–162 and 170–214; these read PDEKIKSRLDPLREMQK and HGGD…RSRA. The stretch at 196–222 forms a coiled coil; it reads LDQLRAERLRREAAERSRAEALLARVQ. Serine 245 carries the phosphoserine modification.

This is Leukocyte receptor cluster member 1 (LENG1) from Homo sapiens (Human).